The following is a 162-amino-acid chain: Phosphopantetheine adenylyltransferase (162 aa).

Threonine 9 contributes to the substrate binding site. Residues 9–10 (TF) and histidine 17 contribute to the ATP site. The substrate site is built by lysine 41, leucine 77, and arginine 91. ATP-binding positions include 92–94 (GLR), glutamate 102, and 127–133 (RQAIASK).

Belongs to the bacterial CoaD family. Homohexamer. It depends on Mg(2+) as a cofactor.

It is found in the cytoplasm. The catalysed reaction is (R)-4'-phosphopantetheine + ATP + H(+) = 3'-dephospho-CoA + diphosphate. It functions in the pathway cofactor biosynthesis; coenzyme A biosynthesis; CoA from (R)-pantothenate: step 4/5. Its function is as follows. Reversibly transfers an adenylyl group from ATP to 4'-phosphopantetheine, yielding dephospho-CoA (dPCoA) and pyrophosphate. This is Phosphopantetheine adenylyltransferase from Cereibacter sphaeroides (strain ATCC 17029 / ATH 2.4.9) (Rhodobacter sphaeroides).